Reading from the N-terminus, the 398-residue chain is NADH dehydrogenase [ubiquinone] iron-sulfur protein 2 (398 aa).

Positions 261, 267, and 282 each coordinate [4Fe-4S] cluster.

It belongs to the complex I 49 kDa subunit family. In terms of assembly, complex I is composed of about 45 different subunits. This is a component of the iron-sulfur (IP) fragment of the enzyme. [4Fe-4S] cluster serves as cofactor.

The protein resides in the mitochondrion. The catalysed reaction is a ubiquinone + NADH + 5 H(+)(in) = a ubiquinol + NAD(+) + 4 H(+)(out). Functionally, core subunit of the mitochondrial membrane respiratory chain NADH dehydrogenase (Complex I) that is believed to belong to the minimal assembly required for catalysis. Complex I functions in the transfer of electrons from NADH to the respiratory chain. The immediate electron acceptor for the enzyme is believed to be ubiquinone. Component of the iron-sulfur (IP) fragment of the enzyme. This is NADH dehydrogenase [ubiquinone] iron-sulfur protein 2 (NAD7) from Nephroselmis olivacea (Green alga).